A 239-amino-acid polypeptide reads, in one-letter code: Cysteine-rich venom protein (239 aa).

Positions 1–18 (MIVFILLSLAAVLQQSVA) are cleaved as a signal peptide. Positions 37–165 (VDMHNSFRRS…PYNYFYVCQY (129 aa)) constitute an SCP domain. 7 disulfides stabilise this stretch: Cys-74-Cys-152, Cys-91-Cys-166, Cys-147-Cys-163, Cys-185-Cys-192, Cys-188-Cys-197, Cys-210-Cys-228, and Cys-219-Cys-232. Positions 201–234 (CPINNVFTNCDSLLQQSSCEDSYITTNCGASCFC) constitute a ShKT domain.

It belongs to the CRISP family. As to expression, expressed by the venom gland.

It is found in the secreted. Functionally, blocks contraction of smooth muscle elicited by high potassium-induced depolarization, but does not block caffeine-stimulated contraction. May target voltage-gated calcium channels on smooth muscle. This is Cysteine-rich venom protein from Cerberus rynchops (Dog-faced water snake).